We begin with the raw amino-acid sequence, 321 residues long: Ribosomal protein L11 methyltransferase (321 aa).

The S-adenosyl-L-methionine site is built by Thr-150, Gly-171, Asp-193, and Asn-256.

Belongs to the methyltransferase superfamily. PrmA family.

The protein resides in the cytoplasm. The enzyme catalyses L-lysyl-[protein] + 3 S-adenosyl-L-methionine = N(6),N(6),N(6)-trimethyl-L-lysyl-[protein] + 3 S-adenosyl-L-homocysteine + 3 H(+). In terms of biological role, methylates ribosomal protein L11. This is Ribosomal protein L11 methyltransferase from Herpetosiphon aurantiacus (strain ATCC 23779 / DSM 785 / 114-95).